The primary structure comprises 331 residues: Holliday junction branch migration complex subunit RuvB (331 aa).

A large ATPase domain (RuvB-L) region spans residues 4–182; the sequence is KDILQSSECI…FGIPMHLEFY (179 aa). ATP contacts are provided by residues Arg22, Gly63, Lys66, Thr67, Thr68, 129 to 131, Arg172, Tyr182, and Arg219; that span reads EDF. A Mg(2+)-binding site is contributed by Thr67. Residues 183–253 form a small ATPAse domain (RuvB-S) region; that stretch reads STEELTKVIK…FADQALLRLG (71 aa). Residues 256-331 form a head domain (RuvB-H) region; it reads KLGLDRQDIK…SYLNEQTYNM (76 aa). Residues Arg309 and Arg314 each coordinate DNA.

Belongs to the RuvB family. Homohexamer. Forms an RuvA(8)-RuvB(12)-Holliday junction (HJ) complex. HJ DNA is sandwiched between 2 RuvA tetramers; dsDNA enters through RuvA and exits via RuvB. An RuvB hexamer assembles on each DNA strand where it exits the tetramer. Each RuvB hexamer is contacted by two RuvA subunits (via domain III) on 2 adjacent RuvB subunits; this complex drives branch migration. In the full resolvosome a probable DNA-RuvA(4)-RuvB(12)-RuvC(2) complex forms which resolves the HJ.

It is found in the cytoplasm. The catalysed reaction is ATP + H2O = ADP + phosphate + H(+). In terms of biological role, the RuvA-RuvB-RuvC complex processes Holliday junction (HJ) DNA during genetic recombination and DNA repair, while the RuvA-RuvB complex plays an important role in the rescue of blocked DNA replication forks via replication fork reversal (RFR). RuvA specifically binds to HJ cruciform DNA, conferring on it an open structure. The RuvB hexamer acts as an ATP-dependent pump, pulling dsDNA into and through the RuvAB complex. RuvB forms 2 homohexamers on either side of HJ DNA bound by 1 or 2 RuvA tetramers; 4 subunits per hexamer contact DNA at a time. Coordinated motions by a converter formed by DNA-disengaged RuvB subunits stimulates ATP hydrolysis and nucleotide exchange. Immobilization of the converter enables RuvB to convert the ATP-contained energy into a lever motion, pulling 2 nucleotides of DNA out of the RuvA tetramer per ATP hydrolyzed, thus driving DNA branch migration. The RuvB motors rotate together with the DNA substrate, which together with the progressing nucleotide cycle form the mechanistic basis for DNA recombination by continuous HJ branch migration. Branch migration allows RuvC to scan DNA until it finds its consensus sequence, where it cleaves and resolves cruciform DNA. The polypeptide is Holliday junction branch migration complex subunit RuvB (Ehrlichia ruminantium (strain Gardel)).